The following is a 215-amino-acid chain: Protein Syd (215 aa).

The protein belongs to the Syd family.

Its subcellular location is the cell inner membrane. Its function is as follows. Interacts with the SecY protein in vivo. May bind preferentially to an uncomplexed state of SecY, thus functioning either as a chelating agent for excess SecY in the cell or as a regulatory factor that negatively controls the translocase function. The sequence is that of Protein Syd from Shewanella piezotolerans (strain WP3 / JCM 13877).